Reading from the N-terminus, the 250-residue chain is Ubiquinone/menaquinone biosynthesis C-methyltransferase UbiE (250 aa).

S-adenosyl-L-methionine-binding positions include Thr74, Asp94, 122–123 (DA), and Ser139.

It belongs to the class I-like SAM-binding methyltransferase superfamily. MenG/UbiE family.

The catalysed reaction is a 2-demethylmenaquinol + S-adenosyl-L-methionine = a menaquinol + S-adenosyl-L-homocysteine + H(+). It catalyses the reaction a 2-methoxy-6-(all-trans-polyprenyl)benzene-1,4-diol + S-adenosyl-L-methionine = a 5-methoxy-2-methyl-3-(all-trans-polyprenyl)benzene-1,4-diol + S-adenosyl-L-homocysteine + H(+). It participates in quinol/quinone metabolism; menaquinone biosynthesis; menaquinol from 1,4-dihydroxy-2-naphthoate: step 2/2. It functions in the pathway cofactor biosynthesis; ubiquinone biosynthesis. Functionally, methyltransferase required for the conversion of demethylmenaquinol (DMKH2) to menaquinol (MKH2) and the conversion of 2-polyprenyl-6-methoxy-1,4-benzoquinol (DDMQH2) to 2-polyprenyl-3-methyl-6-methoxy-1,4-benzoquinol (DMQH2). The polypeptide is Ubiquinone/menaquinone biosynthesis C-methyltransferase UbiE (Paracoccus denitrificans (strain Pd 1222)).